A 366-amino-acid chain; its full sequence is Probable methyltransferase-like protein 24 (366 aa).

A signal peptide spans methionine 1–leucine 29. Positions alanine 36–tryptophan 110 are disordered. Positions serine 44–glycine 63 are enriched in pro residues. Residues threonine 91 to arginine 100 show a composition bias toward low complexity.

It belongs to the methyltransferase superfamily.

Its subcellular location is the secreted. Its function is as follows. Probable methyltransferase. This Homo sapiens (Human) protein is Probable methyltransferase-like protein 24 (METTL24).